Reading from the N-terminus, the 316-residue chain is Probable 5-dehydro-4-deoxyglucarate dehydratase 1 (316 aa).

It belongs to the DapA family.

It catalyses the reaction 5-dehydro-4-deoxy-D-glucarate + H(+) = 2,5-dioxopentanoate + CO2 + H2O. Its pathway is carbohydrate acid metabolism; D-glucarate degradation; 2,5-dioxopentanoate from D-glucarate: step 2/2. The sequence is that of Probable 5-dehydro-4-deoxyglucarate dehydratase 1 from Streptomyces coelicolor (strain ATCC BAA-471 / A3(2) / M145).